We begin with the raw amino-acid sequence, 615 residues long: DNA mismatch repair protein MutL (615 aa).

Residues 362 to 397 form a disordered region; that stretch reads HFAEPAVREPVAPRYSPAPASGSRPAASWPNAQPGY. Positions 373 to 391 are enriched in low complexity; that stretch reads APRYSPAPASGSRPAASWP.

Belongs to the DNA mismatch repair MutL/HexB family.

In terms of biological role, this protein is involved in the repair of mismatches in DNA. It is required for dam-dependent methyl-directed DNA mismatch repair. May act as a 'molecular matchmaker', a protein that promotes the formation of a stable complex between two or more DNA-binding proteins in an ATP-dependent manner without itself being part of a final effector complex. The chain is DNA mismatch repair protein MutL from Escherichia coli O6:H1 (strain CFT073 / ATCC 700928 / UPEC).